A 4351-amino-acid chain; its full sequence is Protocadherin Fat 2 (4351 aa).

The first 18 residues, 1-18 (MTLVLLGLAILLLHRAAC), serve as a signal peptide directing secretion. The Extracellular segment spans residues 19–4050 (EKSLEETIPP…IKRGDWGQQE (4032 aa)). Cadherin domains are found at residues 34–148 (THSL…KPLF) and 149–256 (SPPS…PPAI). N39, N210, N280, and N330 each carry an N-linked (GlcNAc...) asparagine glycan. Cadherin domains are found at residues 363–458 (EKAV…APVF), 459–564 (NRSS…QPMF), 565–669 (EEVN…VPVQ), 716–820 (DHFP…PPRF), 821–925 (PPGG…PPQC), 926–1032 (ITEH…SPHF), 1033–1142 (SSFV…RPVF), 1138–1242 (SRPV…PPMF), 1243–1346 (SHKL…SSIP), 1350–1448 (DESY…RPQF), 1449–1555 (LQDH…SPHF), 1556–1660 (TQLR…APVF), 1661–1758 (SKDE…PPAF), 1759–1872 (GKPT…PPRF), 1873–1968 (SEQI…SLQF), 1969–2070 (DQDV…IPEF), 2071–2171 (QHLP…NPLF), 2172–2272 (QSPY…PPTF), 2273–2379 (SQLV…PPKF), 2380–2481 (REPQ…SPEF), 2482–2585 (QQNV…APQF), 2586–2692 (KASG…LPKF), 2693–2799 (SEPL…RPVF), 2800–2908 (EADP…PPRF), 2909–3013 (ASED…SPQC), 3014–3115 (SQLL…APRF), 3116–3220 (FPSH…LPIF), 3221–3323 (LNAE…HPRF), 3324–3428 (THDL…PPRF), 3429–3533 (FQLN…PPST), and 3534–3631 (LPLE…VPQQ). N-linked (GlcNAc...) asparagine glycosylation is found at N459, N568, N627, and N789. N996 carries an N-linked (GlcNAc...) asparagine glycan. Residues N1175, N1276, and N1417 are each glycosylated (N-linked (GlcNAc...) asparagine). Residues N1899, N1998, N2007, N2102, N2165, N2183, N2325, N2368, N2387, N2430, N2470, N2547, and N2597 are each glycosylated (N-linked (GlcNAc...) asparagine). N-linked (GlcNAc...) asparagine glycans are attached at residues N3127, N3278, and N3312. N-linked (GlcNAc...) asparagine glycans are attached at residues N3432, N3603, N3770, N3774, N3815, N3842, N3875, and N3906. The Laminin G-like domain occupies 3775–3946 (GTTLRFSGQS…RLETWALSQC (172 aa)). Disulfide bonds link C3914–C3946, C3953–C3964, C3958–C3974, and C3976–C3985. EGF-like domains follow at residues 3949–3986 (PGTA…RNCE) and 3988–4024 (GREN…DRCE). N-linked (GlcNAc...) asparagine glycosylation occurs at N3991. Intrachain disulfides connect C3992–C4003, C3997–C4012, and C4014–C4023. Residues 4051 to 4071 (FLVITVALPLVIIATVGLLLY) traverse the membrane as a helical segment. The Cytoplasmic portion of the chain corresponds to 4072-4351 (CRRRKSHKPV…DYGSCEEVMF (280 aa)). The interval 4316–4340 (VNGGPATGRSQPRAPPNYEGSDMVE) is disordered.

In terms of assembly, homodimer. Cerebellum-specific expression. Expressed in thin parallel fibers of cerebellar granule cells.

It is found in the cell membrane. The protein localises to the cell junction. Its subcellular location is the golgi apparatus. The protein resides in the trans-Golgi network. Functionally, involved in the regulation of cell migration. May be involved in mediating the organization of the parallel fibers of granule cells during cerebellar development. The sequence is that of Protocadherin Fat 2 (Fat2) from Rattus norvegicus (Rat).